The following is a 419-amino-acid chain: Metacaspase-1 (419 aa).

A disordered region spans residues 1–109; that stretch reads MSGYPGYNNG…PPQGMHAFGQ (109 aa). 2 stretches are compositionally biased toward pro residues: residues 18–37 and 45–61; these read QYPP…PPPQ and QPPP…PPPQ. Over residues 83-95 the composition is skewed to polar residues; that stretch reads SVNSNAYTNGNQN. Catalysis depends on residues histidine 210 and cysteine 266.

Belongs to the peptidase C14B family.

Involved in cell death (apoptosis). The protein is Metacaspase-1 (casA) of Botryotinia fuckeliana (strain B05.10) (Noble rot fungus).